The following is a 268-amino-acid chain: 3-methyl-2-oxobutanoate hydroxymethyltransferase (268 aa).

The Mg(2+) site is built by aspartate 41 and aspartate 80. Residues 41-42 (DS), aspartate 80, and lysine 110 each bind 3-methyl-2-oxobutanoate. Mg(2+) is bound at residue glutamate 112. Glutamate 178 acts as the Proton acceptor in catalysis.

It belongs to the PanB family. Homodecamer; pentamer of dimers. Mg(2+) is required as a cofactor.

It localises to the cytoplasm. The enzyme catalyses 3-methyl-2-oxobutanoate + (6R)-5,10-methylene-5,6,7,8-tetrahydrofolate + H2O = 2-dehydropantoate + (6S)-5,6,7,8-tetrahydrofolate. It participates in cofactor biosynthesis; coenzyme A biosynthesis. Its function is as follows. Catalyzes the reversible reaction in which hydroxymethyl group from 5,10-methylenetetrahydrofolate is transferred onto alpha-ketoisovalerate to form ketopantoate. The polypeptide is 3-methyl-2-oxobutanoate hydroxymethyltransferase (Natronomonas pharaonis (strain ATCC 35678 / DSM 2160 / CIP 103997 / JCM 8858 / NBRC 14720 / NCIMB 2260 / Gabara) (Halobacterium pharaonis)).